Reading from the N-terminus, the 148-residue chain is Large ribosomal subunit protein cL37 (148 aa).

The N-terminal 65 residues, 1-65 (MALLCFNSLP…SSHGRIVVKA (65 aa)), are a transit peptide targeting the chloroplast. Ala66 carries the post-translational modification N-acetylalanine. A disordered region spans residues 125-148 (LVRKRKMRKKGRWPPSKMKKNKNV).

It belongs to the chloroplast-specific ribosomal protein cL37 family. Part of the 50S ribosomal subunit.

It is found in the plastid. The protein resides in the chloroplast. This chain is Large ribosomal subunit protein cL37 (PSRP5), found in Arabidopsis thaliana (Mouse-ear cress).